The primary structure comprises 491 residues: E3 ubiquitin-protein ligase Hakai (491 aa).

Residues 1–61 (MDHTDNELQG…PAKAPPGDEE (61 aa)) form a disordered region. The RING-type zinc finger occupies 109–149 (CDKCGLPIKIYGRMIPCKHVFCYDCAILHEKKGDKMCPGCS). The interval 148–206 (CSDPVQRIEQCTRGSLFMCSIVQGCKRTYLSQRDLQAHINHRHMRAGKPVTRASLENVH) is HYB domain. The C2H2-type zinc-finger motif lies at 164–190 (FMCSIVQGCKRTYLSQRDLQAHINHRH). Ser201, Ser285, and Ser290 each carry phosphoserine. Positions 255–491 (QPHEDIRAPP…DQTRYRPYYQ (237 aa)) are disordered. 3 stretches are compositionally biased toward pro residues: residues 342-359 (APPP…PHPP), 372-389 (APPP…PPPG), and 399-423 (MNHP…PPHH). Residues 427-442 (NSLPQFTEDQGTLSPP) show a composition bias toward polar residues. Over residues 457–478 (PRGPPPPPRLQGPPSQTPLPGP) the composition is skewed to pro residues.

The protein belongs to the Hakai family. In terms of assembly, homodimer. Interacts with tyrosine-phosphorylated SRC substrates. Component of the WMM complex, a N6-methyltransferase complex composed of a catalytic subcomplex, named MAC, and of an associated subcomplex, named MACOM. The MAC subcomplex is composed of METTL3 and METTL14. The MACOM subcomplex is composed of WTAP, ZC3H13, CBLL1/HAKAI, VIRMA, and, in some cases of RBM15 (RBM15 or RBM15B). Also a component of a MACOM-like complex, named WTAP complex, composed of WTAP, ZC3H13, CBLL1, VIRMA, RBM15, BCLAF1 and THRAP3. Post-translationally, phosphorylated on tyrosine residues.

It is found in the nucleus speckle. It localises to the nucleus. The protein localises to the nucleoplasm. Its subcellular location is the cytoplasm. The enzyme catalyses S-ubiquitinyl-[E2 ubiquitin-conjugating enzyme]-L-cysteine + [acceptor protein]-L-lysine = [E2 ubiquitin-conjugating enzyme]-L-cysteine + N(6)-ubiquitinyl-[acceptor protein]-L-lysine.. It functions in the pathway protein modification; protein ubiquitination. Functionally, E3 ubiquitin-protein ligase that mediates ubiquitination of several tyrosine-phosphorylated Src substrates, including CDH1, CTTN and DOK1. Targets CDH1 for endocytosis and degradation. Associated component of the WMM complex, a complex that mediates N6-methyladenosine (m6A) methylation of RNAs, a modification that plays a role in the efficiency of mRNA splicing and RNA processing. Its function in the WMM complex is unknown. The sequence is that of E3 ubiquitin-protein ligase Hakai from Homo sapiens (Human).